The sequence spans 62 residues: Defensin BmKDfsin3 (62 aa).

The first 24 residues, 1–24 (MKTIVILFVLALVFCTLEMGMVEA), serve as a signal peptide directing secretion. 3 cysteine pairs are disulfide-bonded: Cys-28/Cys-49, Cys-35/Cys-57, and Cys-39/Cys-59.

Belongs to the invertebrate defensin family. Type 2 subfamily. Low expression in both venom and non-venom glands (hemolymph).

It is found in the secreted. Antibacterial peptide active against Gram-positive bacteria (including S.aureus ATCC25923 (MIC=2.5 uM), M.luteus AB93113 (MIC=2.5 uM), and the antibiotic-resistant S.epidermidis PRSE P1389 (MIC=1.25 uM)), but not against Gram-negative bacteria (including E.coli and P.aeruginosa). Also blocks the currents of Kv1.1/KCNA1 (57% inhibition), Kv1.2/KCNA2 (27.5% inhibition), Kv1.3/KCNA3 (IC(50)=23.4 nM, 84.3% inhibition), KCa3.1/KCNN4/IK (15% inhibition), KCa2.3/KCNN3/SK3 (87.5% inhibition) and Kv11.1/KCNH2/ERG1 (30.4% inhibition) channels (tested at 1 uM). It inhibits potassium channel current by interacting with the pore region. This Olivierus martensii (Manchurian scorpion) protein is Defensin BmKDfsin3.